We begin with the raw amino-acid sequence, 242 residues long: ATP-dependent dethiobiotin synthetase BioD (242 aa).

Glu-12 to Val-17 serves as a coordination point for ATP. Mg(2+) is bound at residue Thr-16. Lys-37 is a catalytic residue. Residue Ser-41 coordinates substrate. ATP contacts are provided by residues Asp-51 and Glu-112–Gly-115. Mg(2+)-binding residues include Asp-51 and Glu-112.

This sequence belongs to the dethiobiotin synthetase family. Homodimer. Mg(2+) serves as cofactor.

The protein localises to the cytoplasm. The catalysed reaction is (7R,8S)-7,8-diammoniononanoate + CO2 + ATP = (4R,5S)-dethiobiotin + ADP + phosphate + 3 H(+). The protein operates within cofactor biosynthesis; biotin biosynthesis; biotin from 7,8-diaminononanoate: step 1/2. In terms of biological role, catalyzes a mechanistically unusual reaction, the ATP-dependent insertion of CO2 between the N7 and N8 nitrogen atoms of 7,8-diaminopelargonic acid (DAPA, also called 7,8-diammoniononanoate) to form a ureido ring. The polypeptide is ATP-dependent dethiobiotin synthetase BioD (Bacillus thuringiensis (strain Al Hakam)).